A 498-amino-acid polypeptide reads, in one-letter code: Glycerol kinase (498 aa).

Thr-14 is an ADP binding site. 3 residues coordinate ATP: Thr-14, Thr-15, and Ser-16. Thr-14 contacts sn-glycerol 3-phosphate. Position 18 (Arg-18) interacts with ADP. Sn-glycerol 3-phosphate is bound by residues Arg-84, Glu-85, Tyr-136, and Asp-243. Arg-84, Glu-85, Tyr-136, Asp-243, and Gln-244 together coordinate glycerol. Positions 265 and 308 each coordinate ADP. Positions 265, 308, 312, and 409 each coordinate ATP. 2 residues coordinate ADP: Gly-409 and Asn-413.

The protein belongs to the FGGY kinase family.

The enzyme catalyses glycerol + ATP = sn-glycerol 3-phosphate + ADP + H(+). Its pathway is polyol metabolism; glycerol degradation via glycerol kinase pathway; sn-glycerol 3-phosphate from glycerol: step 1/1. With respect to regulation, inhibited by fructose 1,6-bisphosphate (FBP). In terms of biological role, key enzyme in the regulation of glycerol uptake and metabolism. Catalyzes the phosphorylation of glycerol to yield sn-glycerol 3-phosphate. The protein is Glycerol kinase of Shewanella frigidimarina (strain NCIMB 400).